The sequence spans 286 residues: MNAGPINYKVKLPSGERYTFIKSTLSARNLYTVCEEAHCPNIAECWESGTATFMIMGSNCSRGCRFCAVTHGRMLPLDPMEPEKVYESVKMMNLDYVVITSVDRDDLPDKGSSHFAAVIRRLKDLKIKIEVLIPDFSGVHKFIDKIIDERPDVIAHNIETVRRLTKTVRDPRAGYDQSLNVLRYVKSRSNIITKSSIMLGLGETDDEVIETLHDLHDAGVDIVTIGQYLRPTKKQLEVKEYSPMERFKNLEESAYSIGFSFVASGPLVRTSYRAAEAFVKGGFKND.

[4Fe-4S] cluster is bound by residues cysteine 34, cysteine 39, cysteine 45, cysteine 60, cysteine 64, cysteine 67, and serine 271. Positions 46–260 (WESGTATFMI…EESAYSIGFS (215 aa)) constitute a Radical SAM core domain.

The protein belongs to the radical SAM superfamily. Lipoyl synthase family. The cofactor is [4Fe-4S] cluster.

It localises to the cytoplasm. It carries out the reaction [[Fe-S] cluster scaffold protein carrying a second [4Fe-4S](2+) cluster] + N(6)-octanoyl-L-lysyl-[protein] + 2 oxidized [2Fe-2S]-[ferredoxin] + 2 S-adenosyl-L-methionine + 4 H(+) = [[Fe-S] cluster scaffold protein] + N(6)-[(R)-dihydrolipoyl]-L-lysyl-[protein] + 4 Fe(3+) + 2 hydrogen sulfide + 2 5'-deoxyadenosine + 2 L-methionine + 2 reduced [2Fe-2S]-[ferredoxin]. Its pathway is protein modification; protein lipoylation via endogenous pathway; protein N(6)-(lipoyl)lysine from octanoyl-[acyl-carrier-protein]: step 2/2. Its function is as follows. Catalyzes the radical-mediated insertion of two sulfur atoms into the C-6 and C-8 positions of the octanoyl moiety bound to the lipoyl domains of lipoate-dependent enzymes, thereby converting the octanoylated domains into lipoylated derivatives. This Picrophilus torridus (strain ATCC 700027 / DSM 9790 / JCM 10055 / NBRC 100828 / KAW 2/3) protein is Lipoyl synthase.